The following is a 2208-amino-acid chain: RNA-directed RNA polymerase L (2208 aa).

An endonuclease region spans residues 26–284; it reads KDALLSQVHP…LHQDSDTINC (259 aa). Residues glutamate 51, aspartate 89, and glutamate 102 each coordinate Mn(2+). The active site involves lysine 115. Residues 1171–1367 form the RdRp catalytic domain; that stretch reads CDMKMAVNNG…YLSSKLNKFV (197 aa). Aspartate 1329 is a Mg(2+) binding site.

It belongs to the Bunyavirales RNA polymerase family. In terms of assembly, homomultimer; the oligomeric structure is essential for the polymerase activity. Interacts with nucleoprotein N. Interacts with protein Z; this interaction inhibits viral transcription and replication, Z partially blocks the product exit tunnel for the releasing nascent RNA product. It depends on Mn(2+) as a cofactor. Requires Mg(2+) as cofactor.

It is found in the virion. The protein localises to the host cytoplasm. It catalyses the reaction RNA(n) + a ribonucleoside 5'-triphosphate = RNA(n+1) + diphosphate. RNA-dependent RNA polymerase, which is responsible for the replication and transcription of the viral RNA genome using antigenomic RNA as an intermediate. During transcription, synthesizes subgenomic RNAs and assures their capping by a cap-snatching mechanism, which involves the endonuclease activity cleaving the host capped pre-mRNAs. These short capped RNAs are then used as primers for viral transcription. The 3'-end of subgenomic mRNAs molecules are heterogeneous and not polyadenylated. The replicase function is to direct synthesis of antigenomic and genomic RNA which are encapsidated and non capped. As a consequence of the use of the same enzyme for both transcription and replication, these mechanisms need to be well coordinated. These processes may be regulated by proteins N and Z in a dose-dependent manner. Z protein inhibits the viral polymerase L und thus the viral transcription and RNA synthesis. This Homo sapiens (Human) protein is RNA-directed RNA polymerase L.